Consider the following 540-residue polypeptide: Membrane protein insertase YidC (540 aa).

A run of 5 helical transmembrane segments spans residues 1 to 21 (MVVQ…MMLD), 351 to 371 (NWGI…FPLT), 418 to 438 (LGGC…YYML), 464 to 484 (ILPI…PSSI), and 497 to 517 (PLIF…YYII).

It belongs to the OXA1/ALB3/YidC family. Type 1 subfamily. Interacts with the Sec translocase complex via SecD. Specifically interacts with transmembrane segments of nascent integral membrane proteins during membrane integration.

The protein localises to the cell membrane. Its function is as follows. Required for the insertion and/or proper folding and/or complex formation of integral membrane proteins into the membrane. Involved in integration of membrane proteins that insert both dependently and independently of the Sec translocase complex, as well as at least some lipoproteins. Aids folding of multispanning membrane proteins. The chain is Membrane protein insertase YidC from Wigglesworthia glossinidia brevipalpis.